The sequence spans 371 residues: Probable acetylxylan esterase A (371 aa).

An N-terminal signal peptide occupies residues 1–19 (MRALSVFVALFSFLALSSA). The tract at residues 32–304 (GSLQQVTNFG…GEQDMEWFGF (273 aa)) is catalytic. Serine 149 functions as the Charge relay system in the catalytic mechanism. N-linked (GlcNAc...) asparagine glycosylation occurs at asparagine 191. The disordered stretch occupies residues 305–335 (TGGSSSTTTTATTPPTTSTTTSSGGSSTSTG). The tract at residues 305-336 (TGGSSSTTTTATTPPTTSTTTSSGGSSTSTGV) is ser/Thr-rich linker. The span at 307–335 (GSSSTTTTATTPPTTSTTTSSGGSSTSTG) shows a compositional bias: low complexity. Residues 335 to 371 (GVAEHWGQCGGNGWTGPTACASGYTCTVINEWYSQCL) form the CBM1 domain.

It belongs to the carbohydrate esterase 1 (CE1) family. AxeA subfamily. Monomer.

The protein resides in the secreted. It catalyses the reaction Deacetylation of xylans and xylo-oligosaccharides.. It participates in glycan degradation; xylan degradation. Functionally, acetylxylan esterase involved in the hydrolysis of xylan, a major structural heterogeneous polysaccharide found in plant biomass representing the second most abundant polysaccharide in the biosphere, after cellulose. Degrades acetylated xylans by cleaving acetyl side groups from the hetero-xylan backbone. This is Probable acetylxylan esterase A (axeA) from Aspergillus fumigatus (strain ATCC MYA-4609 / CBS 101355 / FGSC A1100 / Af293) (Neosartorya fumigata).